Consider the following 176-residue polypeptide: MDGSSDNLIAVGRISGTHGIRGQLRLHSYSGNLESLQAAKNVLIRFPAGGTRQIQLKKAAYHSGKFLLTLEGFDTIEKAQELAGAELLLQREQLPPPDADEYYWHDLLGLSVVTNEGQALGIIKDILETGANDVYLVRDDATKREYLIPAIASVISSVNIHTGTMTITPLEGLLDL.

Positions 99–173 (ADEYYWHDLL…TMTITPLEGL (75 aa)) constitute a PRC barrel domain.

It belongs to the RimM family. As to quaternary structure, binds ribosomal protein uS19.

It localises to the cytoplasm. Functionally, an accessory protein needed during the final step in the assembly of 30S ribosomal subunit, possibly for assembly of the head region. Essential for efficient processing of 16S rRNA. May be needed both before and after RbfA during the maturation of 16S rRNA. It has affinity for free ribosomal 30S subunits but not for 70S ribosomes. The chain is Ribosome maturation factor RimM from Trichlorobacter lovleyi (strain ATCC BAA-1151 / DSM 17278 / SZ) (Geobacter lovleyi).